The chain runs to 452 residues: Bifunctional protein GlmU (452 aa).

The tract at residues 1–224 is pyrophosphorylase; sequence MNIVILAAGM…EWETHGVNSK (224 aa). UDP-N-acetyl-alpha-D-glucosamine-binding positions include 6–9, K20, Q71, 76–77, 98–100, G135, E149, N164, and N222; these read LAAG, GT, and YGD. Mg(2+) is bound at residue D100. Position 222 (N222) interacts with Mg(2+). Residues 225-245 form a linker region; it reads VQLAELERIHQRNIAHALLEQ. The N-acetyltransferase stretch occupies residues 246–452; that stretch reads GVTLADPARI…NWQRPVKIKK (207 aa). Residues R328 and K346 each contribute to the UDP-N-acetyl-alpha-D-glucosamine site. H358 (proton acceptor) is an active-site residue. Residues Y361 and N372 each coordinate UDP-N-acetyl-alpha-D-glucosamine. Residues A375, 381-382, S400, A418, and R435 contribute to the acetyl-CoA site; that span reads NY.

In the N-terminal section; belongs to the N-acetylglucosamine-1-phosphate uridyltransferase family. It in the C-terminal section; belongs to the transferase hexapeptide repeat family. As to quaternary structure, homotrimer. Mg(2+) serves as cofactor.

It localises to the cytoplasm. The enzyme catalyses alpha-D-glucosamine 1-phosphate + acetyl-CoA = N-acetyl-alpha-D-glucosamine 1-phosphate + CoA + H(+). It catalyses the reaction N-acetyl-alpha-D-glucosamine 1-phosphate + UTP + H(+) = UDP-N-acetyl-alpha-D-glucosamine + diphosphate. The protein operates within nucleotide-sugar biosynthesis; UDP-N-acetyl-alpha-D-glucosamine biosynthesis; N-acetyl-alpha-D-glucosamine 1-phosphate from alpha-D-glucosamine 6-phosphate (route II): step 2/2. It functions in the pathway nucleotide-sugar biosynthesis; UDP-N-acetyl-alpha-D-glucosamine biosynthesis; UDP-N-acetyl-alpha-D-glucosamine from N-acetyl-alpha-D-glucosamine 1-phosphate: step 1/1. It participates in bacterial outer membrane biogenesis; LPS lipid A biosynthesis. Functionally, catalyzes the last two sequential reactions in the de novo biosynthetic pathway for UDP-N-acetylglucosamine (UDP-GlcNAc). The C-terminal domain catalyzes the transfer of acetyl group from acetyl coenzyme A to glucosamine-1-phosphate (GlcN-1-P) to produce N-acetylglucosamine-1-phosphate (GlcNAc-1-P), which is converted into UDP-GlcNAc by the transfer of uridine 5-monophosphate (from uridine 5-triphosphate), a reaction catalyzed by the N-terminal domain. The protein is Bifunctional protein GlmU of Janthinobacterium sp. (strain Marseille) (Minibacterium massiliensis).